A 265-amino-acid polypeptide reads, in one-letter code: Seminal vesicle secretory protein 3A (265 aa).

Positions 1 to 20 (MKSIFFSLSLLLLLEKKAAG) are cleaved as a signal peptide. Repeat copies occupy residues 116–119 (QIKS), 122–125 (QVKS), 129–132 (QLKS), 136–139 (QLKT), and 142–145 (QVKS). The tract at residues 116–145 (QIKSQTQVKSYAAQLKSQPGQLKTIGQVKS) is 5 X 4 AA tandem repeats of Q-X-K-[ST].

In terms of processing, glycosylated. Covalently cross-linked by transglutaminase, which is important for the formation of the gelatinous copulatory plug. Five repeats of Q-X-K-(S/T) in the central region of the protein serve as the transglutaminase substrate site(s). In terms of tissue distribution, highly expressed in the seminal vesicle where it is detected in luminal epithelium of the mucosa folds, and also in luminal fluid (at protein level). Not detected in other tissues tested.

Its subcellular location is the secreted. Component of the copulatory plug. This chain is Seminal vesicle secretory protein 3A, found in Mus musculus (Mouse).